We begin with the raw amino-acid sequence, 734 residues long: Ribosomal RNA large subunit methyltransferase K/L (734 aa).

One can recognise a THUMP domain in the interval 49–167 (HAYRICMWSR…KTEHTYCLDL (119 aa)).

This sequence belongs to the methyltransferase superfamily. RlmKL family.

The protein localises to the cytoplasm. The enzyme catalyses guanosine(2445) in 23S rRNA + S-adenosyl-L-methionine = N(2)-methylguanosine(2445) in 23S rRNA + S-adenosyl-L-homocysteine + H(+). The catalysed reaction is guanosine(2069) in 23S rRNA + S-adenosyl-L-methionine = N(2)-methylguanosine(2069) in 23S rRNA + S-adenosyl-L-homocysteine + H(+). Its function is as follows. Specifically methylates the guanine in position 2445 (m2G2445) and the guanine in position 2069 (m7G2069) of 23S rRNA. In Acinetobacter baumannii (strain AYE), this protein is Ribosomal RNA large subunit methyltransferase K/L.